Here is a 147-residue protein sequence, read N- to C-terminus: Peptidyl-lysine N-acetyltransferase YjaB (147 aa).

The region spanning 3-144 is the N-acetyltransferase domain; sequence ISIRRSRHEE…KPYPLLNLAY (142 aa).

This sequence belongs to the acetyltransferase family.

The catalysed reaction is L-lysyl-[protein] + acetyl-CoA = N(6)-acetyl-L-lysyl-[protein] + CoA + H(+). Functionally, N-epsilon-lysine acetyltransferase that catalyzes acetylation of a large number of proteins. Binds acetyl-CoA. In Escherichia coli (strain K12), this protein is Peptidyl-lysine N-acetyltransferase YjaB (yjaB).